Here is a 202-residue protein sequence, read N- to C-terminus: MSDKAAAPKKQGRNNGAVVLMCLSFVFGMGAMSYAAVPLYRIFCQVTGYNGTTQRVEQMSSVVLDRKMRVTFDANVAPGLQWDFKPVEREVNPRIGETIQVKFTAENRSNETQRGQAVFNVTPGEAGVYFNKVQCFCFTETDLKPGEKLEMPVVFYIDPEIVNAVESKDIHTVTLSYTFYPKEGPKPLASNEGGAEKVEKKL.

Over Met-1 to Arg-13 the chain is Cytoplasmic. A helical; Signal-anchor for type II membrane protein transmembrane segment spans residues Asn-14–Ala-36. Over Val-37 to Leu-202 the chain is Periplasmic. The segment at Glu-183–Leu-202 is disordered.

It belongs to the COX11/CtaG family.

The protein resides in the cell inner membrane. Functionally, exerts its effect at some terminal stage of cytochrome c oxidase synthesis, probably by being involved in the insertion of the copper B into subunit I. The protein is Cytochrome c oxidase assembly protein CtaG of Rhizobium etli (strain CIAT 652).